We begin with the raw amino-acid sequence, 322 residues long: Ferrochelatase (322 aa).

2 residues coordinate Fe cation: His-194 and Glu-275.

This sequence belongs to the ferrochelatase family.

It is found in the cytoplasm. The enzyme catalyses heme b + 2 H(+) = protoporphyrin IX + Fe(2+). It participates in porphyrin-containing compound metabolism; protoheme biosynthesis; protoheme from protoporphyrin-IX: step 1/1. Catalyzes the ferrous insertion into protoporphyrin IX. The polypeptide is Ferrochelatase (Yersinia enterocolitica).